The primary structure comprises 301 residues: Putative two-component membrane permease complex subunit SMU_747c (301 aa).

Helical transmembrane passes span 15-35 (LAIF…GAIL), 60-80 (ILFG…IVPI), 97-117 (FLAT…SAFG), 124-144 (FLRL…LGFI), 188-208 (YLIF…TRIL), 211-231 (IGHN…ILSL), 238-258 (FIGT…FLLI), and 278-298 (FILQ…LIVG).

It belongs to the UPF0718 family. As to quaternary structure, interacts with SMU_746c.

Its subcellular location is the cell membrane. Functionally, could be part of a two-component membrane permease system responsible for amino acid transport under low pH. Involved in acidogenesis, biofilm formation and low-pH survival. The sequence is that of Putative two-component membrane permease complex subunit SMU_747c from Streptococcus mutans serotype c (strain ATCC 700610 / UA159).